The following is a 482-amino-acid chain: MKFIIKLFPEITIKSQSVRLRFIKILTGNIRNVLKHYDETLAVVRHWDNIEVRAKDENQRLAIRDALTRIPGIHHILEVEDVPFTDMHDIFEKALAQYREQLEGKTFCVRVKRRGKHEFSSIEVERYVGGGLNQHIESARVKLTNPDVTVHLEVEDDRLLLIKGRYEGIGGFPIGTQEDVLSLISGGFDSSVSSYMLMRRGCRVHYCFFNLGGAAHEIGVRQVAHYLWNRFGSSHRVRFVAINFEPVVGEILEKVDDGQMGVVLKRMMVRAASKVAERYGVQALVTGEALGQVSSQTLTNLRLIDNVSDTLILRPLISYDKEHIINLARQIGTEDFARTMPEYCGVISKSPTVKAIKAKIEAEEENFDFSILDKVVEEANNVDIREIAQQTQQEVVEVETVSGFGANDVILDIRSVDEQDDKPLKVEGVDVVSLPFYKLSTKFGDLDQSKTWLLWCERGVMSRLQALYLREQGFANVKVYRP.

The THUMP domain maps to 61–165 (LAIRDALTRI…DDRLLLIKGR (105 aa)). ATP is bound by residues 183–184 (LI), lysine 265, glycine 287, and glutamine 296. The cysteines at positions 344 and 456 are disulfide-linked. Positions 404–482 (FGANDVILDI…GFANVKVYRP (79 aa)) constitute a Rhodanese domain. Catalysis depends on cysteine 456, which acts as the Cysteine persulfide intermediate.

This sequence belongs to the ThiI family.

It is found in the cytoplasm. It carries out the reaction [ThiI sulfur-carrier protein]-S-sulfanyl-L-cysteine + a uridine in tRNA + 2 reduced [2Fe-2S]-[ferredoxin] + ATP + H(+) = [ThiI sulfur-carrier protein]-L-cysteine + a 4-thiouridine in tRNA + 2 oxidized [2Fe-2S]-[ferredoxin] + AMP + diphosphate. The enzyme catalyses [ThiS sulfur-carrier protein]-C-terminal Gly-Gly-AMP + S-sulfanyl-L-cysteinyl-[cysteine desulfurase] + AH2 = [ThiS sulfur-carrier protein]-C-terminal-Gly-aminoethanethioate + L-cysteinyl-[cysteine desulfurase] + A + AMP + 2 H(+). It functions in the pathway cofactor biosynthesis; thiamine diphosphate biosynthesis. Its function is as follows. Catalyzes the ATP-dependent transfer of a sulfur to tRNA to produce 4-thiouridine in position 8 of tRNAs, which functions as a near-UV photosensor. Also catalyzes the transfer of sulfur to the sulfur carrier protein ThiS, forming ThiS-thiocarboxylate. This is a step in the synthesis of thiazole, in the thiamine biosynthesis pathway. The sulfur is donated as persulfide by IscS. This chain is tRNA sulfurtransferase, found in Salmonella typhi.